A 309-amino-acid chain; its full sequence is tRNA dimethylallyltransferase (309 aa).

Residue 13–20 (GPTAVGKS) coordinates ATP. 15–20 (TAVGKS) contacts substrate.

This sequence belongs to the IPP transferase family. In terms of assembly, monomer. It depends on Mg(2+) as a cofactor.

It carries out the reaction adenosine(37) in tRNA + dimethylallyl diphosphate = N(6)-dimethylallyladenosine(37) in tRNA + diphosphate. Its function is as follows. Catalyzes the transfer of a dimethylallyl group onto the adenine at position 37 in tRNAs that read codons beginning with uridine, leading to the formation of N6-(dimethylallyl)adenosine (i(6)A). In Lacticaseibacillus casei (strain BL23) (Lactobacillus casei), this protein is tRNA dimethylallyltransferase.